A 449-amino-acid chain; its full sequence is Asparagine--tRNA ligase (449 aa).

This sequence belongs to the class-II aminoacyl-tRNA synthetase family. In terms of assembly, homodimer.

It is found in the cytoplasm. The catalysed reaction is tRNA(Asn) + L-asparagine + ATP = L-asparaginyl-tRNA(Asn) + AMP + diphosphate + H(+). The chain is Asparagine--tRNA ligase from Mesomycoplasma hyopneumoniae (strain 7448) (Mycoplasma hyopneumoniae).